The following is a 261-amino-acid chain: Rhomboid-type serine protease 2 (261 aa).

5 helical membrane-spanning segments follow: residues 17–37 (LTAG…VFPI), 58–78 (LYPL…SLFV), 94–114 (ITLN…GMLL), 116–136 (PNVY…YFAV), and 155–175 (LYIP…SSFV). Catalysis depends on serine 124, which acts as the Nucleophile. The active site involves histidine 177.

It belongs to the peptidase S54 family.

The protein resides in the golgi apparatus membrane. The protein localises to the golgi apparatus. Its subcellular location is the cis-Golgi network membrane. It carries out the reaction Cleaves type-1 transmembrane domains using a catalytic dyad composed of serine and histidine that are contributed by different transmembrane domains.. In terms of biological role, probable rhomboid-type serine protease that catalyzes intramembrane proteolysis. This Eremothecium gossypii (strain ATCC 10895 / CBS 109.51 / FGSC 9923 / NRRL Y-1056) (Yeast) protein is Rhomboid-type serine protease 2 (RBD2).